A 428-amino-acid polypeptide reads, in one-letter code: GTPase Obg (428 aa).

The Obg domain occupies Met1–Leu158. Residues Ala159–Lys331 form the OBG-type G domain. Residues Gly165 to Ser172, Phe190 to Lys194, Asp212 to Gly215, Asn282 to Asp285, and Ser312 to Ala314 contribute to the GTP site. 2 residues coordinate Mg(2+): Ser172 and Thr192. Residues Met345 to Leu428 form the OCT domain.

It belongs to the TRAFAC class OBG-HflX-like GTPase superfamily. OBG GTPase family. Monomer. Mg(2+) is required as a cofactor.

Its subcellular location is the cytoplasm. Its function is as follows. An essential GTPase which binds GTP, GDP and possibly (p)ppGpp with moderate affinity, with high nucleotide exchange rates and a fairly low GTP hydrolysis rate. Plays a role in control of the cell cycle, stress response, ribosome biogenesis and in those bacteria that undergo differentiation, in morphogenesis control. This Clostridium botulinum (strain Eklund 17B / Type B) protein is GTPase Obg.